Here is a 625-residue protein sequence, read N- to C-terminus: Vacuolar-sorting receptor 7 (625 aa).

Positions 1-26 are cleaved as a signal peptide; the sequence is MGLVNGRASLTFLLAALTIIAMVVEA. The Lumenal segment spans residues 27–564; that stretch reads RFVVEKESIS…CIERYGSKTA (538 aa). Residues 58-166 enclose the PA domain; that stretch reads DYGGFLIGSV…SFGDDLRQGF (109 aa). Asn292, Asn400, and Asn432 each carry an N-linked (GlcNAc...) asparagine glycan. 2 EGF-like domains span residues 414 to 464 and 467 to 513; these read ETNE…TSCT and GPAR…LTCE. Intrachain disulfides connect Cys418/Cys436, Cys425/Cys445, Cys447/Cys463, Cys471/Cys491, Cys478/Cys499, Cys501/Cys512, and Cys542/Cys555. Residues 514–556 form the EGF-like 3; calcium-binding domain; the sequence is DINECKERSVCQCSGCRCKNSWGGYKCSCSGDRLYINDQDTCI. Residues 565–585 form a helical membrane-spanning segment; sequence WWLTFLILAIVAVAGLAGYIF. The Cytoplasmic segment spans residues 586 to 625; the sequence is YKYRFRSYMDSEIMTIMSQYMPLESQRAREVPSEAEPFTL. Residues 605 to 608 carry the Tyrosine-based internalization motif motif; that stretch reads YMPL.

This sequence belongs to the VSR (BP-80) family. As to expression, expressed at low levels in seedlings, roots, young leaves, flowers and siliques.

It is found in the golgi apparatus membrane. Functionally, vacuolar-sorting receptor (VSR) involved in clathrin-coated vesicles sorting from Golgi apparatus to vacuoles. The sequence is that of Vacuolar-sorting receptor 7 (VSR7) from Arabidopsis thaliana (Mouse-ear cress).